The primary structure comprises 463 residues: Asparagine--tRNA ligase (463 aa).

This sequence belongs to the class-II aminoacyl-tRNA synthetase family. As to quaternary structure, homodimer.

The protein localises to the cytoplasm. The enzyme catalyses tRNA(Asn) + L-asparagine + ATP = L-asparaginyl-tRNA(Asn) + AMP + diphosphate + H(+). The polypeptide is Asparagine--tRNA ligase (Clostridium botulinum (strain Langeland / NCTC 10281 / Type F)).